The following is a 486-amino-acid chain: MSFANTSSTFEDKMCEGNRTAMASPQLLPLVVVLSSISLVTVGLNLLVLYAVHSERKLHTVGNLYIVSLSVADLIVGAVVMPMNILYLIMTKWSLGRPLCLFWLSMDYVASTASIFSVFILCIDRYRSVQQPLRYLRYRTKTRASATILGAWFFSFLWVIPILGWHHFMPPAPELREDKCETDFYNVTWFKIMTAIINFYLPTLLMLWFYVKIYKAVRRHCQHRQLTNGSLPSFSELKLRSDDTKEGAKKPGRESPWGVLKRPSRDPSVGLDQKSTSEDPKMTSPTVFSQEGERETRPCFRLDIMQKQSVAEGDVRGSKANDQALSQPKMDEQSLNTCRRISETSEDQTLVDQQSFSRTTDSDTSIEPGPGRVKSRSGSNSGLDYIKITWKRLRSHSRQYVSGLHLNRERKAAKQLGFIMAAFILCWIPYFIFFMVIAFCKSCCSEPMHMFTIWLGYINSTLNPLIYPLCNENFKKTFKKILHIRS.

Residues 1–29 lie on the Extracellular side of the membrane; it reads MSFANTSSTFEDKMCEGNRTAMASPQLLP. N-linked (GlcNAc...) asparagine glycans are attached at residues asparagine 5 and asparagine 18. Residues 30 to 50 form a helical membrane-spanning segment; it reads LVVVLSSISLVTVGLNLLVLY. The Cytoplasmic portion of the chain corresponds to 51 to 64; sequence AVHSERKLHTVGNL. The helical transmembrane segment at 65 to 89 threads the bilayer; the sequence is YIVSLSVADLIVGAVVMPMNILYLI. Residues 90-97 lie on the Extracellular side of the membrane; the sequence is MTKWSLGR. Residues 98-123 traverse the membrane as a helical segment; sequence PLCLFWLSMDYVASTASIFSVFILCI. A disulfide bridge links cysteine 100 with cysteine 180. Histamine is bound by residues aspartate 107 and threonine 112. The segment at 107–112 is important for agonist binding; the sequence is DYVAST. Over 124 to 144 the chain is Cytoplasmic; the sequence is DRYRSVQQPLRYLRYRTKTRA. Phosphothreonine occurs at positions 140 and 142. A helical membrane pass occupies residues 145–164; it reads SATILGAWFFSFLWVIPILG. The Extracellular segment spans residues 165-188; the sequence is WHHFMPPAPELREDKCETDFYNVT. A helical membrane pass occupies residues 189–211; the sequence is WFKIMTAIINFYLPTLLMLWFYV. Asparagine 198 provides a ligand contact to histamine. The Cytoplasmic segment spans residues 212 to 415; the sequence is KIYKAVRRHC…LNRERKAAKQ (204 aa). At serine 230 the chain carries Phosphoserine. Over residues 241–253 the composition is skewed to basic and acidic residues; it reads SDDTKEGAKKPGR. Disordered stretches follow at residues 241 to 295 and 310 to 379; these read SDDT…GERE and VAEG…RSGS. Serine 342 and serine 345 each carry phosphoserine. The segment covering 347 to 365 has biased composition (polar residues); sequence DQTLVDQQSFSRTTDSDTS. Phosphoserine occurs at positions 379, 381, 395, and 397. The helical transmembrane segment at 416-439 threads the bilayer; sequence LGFIMAAFILCWIPYFIFFMVIAF. The segment at 423–427 is important for agonist binding; sequence FILCW. Position 430 (tyrosine 430) interacts with histamine. Cysteine 440 and cysteine 443 form a disulfide bridge. Residues 440–445 are Extracellular-facing; it reads CKSCCS. The helical transmembrane segment at 446-468 threads the bilayer; sequence EPMHMFTIWLGYINSTLNPLIYP. The Cytoplasmic segment spans residues 469-486; the sequence is LCNENFKKTFKKILHIRS.

Belongs to the G-protein coupled receptor 1 family. Phosphorylation at sites in the second and third cytoplasmic loops independently contribute to agonist-induced receptor down-regulation.

It localises to the cell membrane. G-protein-coupled receptor for histamine, a biogenic amine that functions as an immune modulator and a neurotransmitter. Through the H1 receptor, histamine mediates the contraction of smooth muscles and increases capillary permeability due to contraction of terminal venules. Also mediates neurotransmission in the central nervous system and thereby regulates circadian rhythms, emotional and locomotor activities as well as cognitive functions. This Rattus norvegicus (Rat) protein is Histamine H1 receptor.